Reading from the N-terminus, the 450-residue chain is Solute carrier family 52, riboflavin transporter, member 2 (450 aa).

5 consecutive transmembrane segments (helical) span residues 14–34, 47–67, 86–106, 112–132, and 147–167; these read LLVA…WVEL, LPSY…LVTL, GLGI…APVA, VAFL…NVTF, and FFLG…GQGV. Residue N178 is glycosylated (N-linked (GlcNAc...) asparagine). A helical membrane pass occupies residues 201 to 221; it reads FFWVLTALLGTSAAAFQGLLL. Residues 227 to 236 are compositionally biased toward low complexity; sequence TSEPTTGTGL. Residues 227–264 are disordered; that stretch reads TSEPTTGTGLRVETPGTEEEEEEEEASPLQEPPGQVAG. The segment covering 242–252 has biased composition (acidic residues); it reads GTEEEEEEEEA. 5 helical membrane-spanning segments follow: residues 282 to 302, 317 to 337, 344 to 364, 369 to 389, and 409 to 429; these read ACLL…LPAV, LAVV…MAVL, LCGL…LAAL, PLVG…LCAG, and ALLA…VAMF.

Belongs to the riboflavin transporter family.

It localises to the cell membrane. The enzyme catalyses riboflavin(in) = riboflavin(out). Riboflavin transport is Na(+)-independent but moderately pH-sensitive. Activity is strongly inhibited by riboflavin analogs, such as lumiflavin. Weakly inhibited by flavin adenine dinucleotide (FAD) and flavin mononucleotide (FMN). Functionally, plasma membrane transporter mediating the uptake by cells of the water soluble vitamin B2/riboflavin that plays a key role in biochemical oxidation-reduction reactions of the carbohydrate, lipid, and amino acid metabolism. May also act as a receptor for 4-hydroxybutyrate. In Mus musculus (Mouse), this protein is Solute carrier family 52, riboflavin transporter, member 2 (Slc52a2).